The chain runs to 678 residues: Protein CASP (678 aa).

Over 1–619 (MAANVGSMSQ…LILSNKTART (619 aa)) the chain is Cytoplasmic. Coiled coils occupy residues 16 to 40 (DLQQLQRELDAAATVLANRQDESEQ), 67 to 374 (LLKS…TLKS), 427 to 454 (HLTEATAKAVEQKELIARLEQDLSTIQS), and 502 to 556 (LSII…FLQS). Serine 586 bears the Phosphoserine mark. Residues 620 to 640 (IGFFYTLFLHCLVFLVLYKLA) form a helical; Anchor for type IV membrane protein membrane-spanning segment. Residues 641–678 (WSESVERDCAATCAKKFADHLHKFHESDNGAAAGDLWQ) are Lumenal-facing.

It belongs to the CASP family. As to quaternary structure, homodimer; disulfide-linked. Interacts with GOLGA5. Ubiquitously expressed.

The protein localises to the golgi apparatus membrane. Its function is as follows. May be involved in intra-Golgi retrograde transport. The chain is Protein CASP (Cux1) from Mus musculus (Mouse).